Reading from the N-terminus, the 1213-residue chain is uncharacterized protein (1213 aa).

One can recognise a PH domain in the interval 289–390 (ATKRQGWLLR…WGSVINNARE (102 aa)). Residues 776–945 (LDDIVFDRVY…EVNFLEKATR (170 aa)) enclose the VASt domain. Transmembrane regions (helical) follow at residues 996–1016 (LFLQGLAIDLLKLPWAVFHIF) and 1025–1045 (FLVIIFACSVILNLSLMFCFG).

It is found in the cytoplasm. The protein resides in the nucleus membrane. The protein localises to the cytoskeleton. It localises to the microtubule organizing center. Its subcellular location is the spindle pole body. This is an uncharacterized protein from Schizosaccharomyces pombe (strain 972 / ATCC 24843) (Fission yeast).